Reading from the N-terminus, the 1940-residue chain is Myosin-1B (1940 aa).

Residues 33-82 form the Myosin N-terminal SH3-like domain; that stretch reads DAKSSVFVVHAKESYVKSTIQSKESGKVTVKTEGGETLTVKEDQIFSMNP. The Myosin motor domain maps to 86–783; that stretch reads DKIEDMAMMT…LLGLLEEMRD (698 aa). Residue K130 is modified to N6,N6,N6-trimethyllysine. Position 179–186 (179–186) interacts with ATP; the sequence is GESGAGKT. 2 actin-binding regions span residues 660 to 682 and 762 to 776; these read LNKL…IPNE and KFGH…GLLG. The IQ domain occupies 786 to 815; that stretch reads LAQLITRTQARCRGFLMRVEFKKMMERRES. Residues 844–1940 adopt a coiled-coil conformation; it reads LLKSAESEKE…EIGKKAESEE (1097 aa). The disordered stretch occupies residues 1912-1940; sequence EERADIAESQVNKLRAKSREIGKKAESEE. The span at 1928–1940 shows a compositional bias: basic and acidic residues; it reads KSREIGKKAESEE.

The protein belongs to the TRAFAC class myosin-kinesin ATPase superfamily. Myosin family. Muscle myosin is a hexameric protein that consists of 2 heavy chain subunits (MHC), 2 alkali light chain subunits (MLC) and 2 regulatory light chain subunits (MLC-2).

The protein localises to the cytoplasm. Its subcellular location is the myofibril. In terms of biological role, muscle contraction. The protein is Myosin-1B (MYH1B) of Gallus gallus (Chicken).